The following is a 216-amino-acid chain: Large ribosomal subunit protein bL25 (216 aa).

The segment at 184-216 is disordered; it reads VPPTSDVEEEEGDEDLEEDVEETAAEEEEGVEE. Positions 189-216 are enriched in acidic residues; the sequence is DVEEEEGDEDLEEDVEETAAEEEEGVEE.

This sequence belongs to the bacterial ribosomal protein bL25 family. CTC subfamily. In terms of assembly, part of the 50S ribosomal subunit; part of the 5S rRNA/L5/L18/L25 subcomplex. Contacts the 5S rRNA. Binds to the 5S rRNA independently of L5 and L18.

This is one of the proteins that binds to the 5S RNA in the ribosome where it forms part of the central protuberance. In Desulforapulum autotrophicum (strain ATCC 43914 / DSM 3382 / VKM B-1955 / HRM2) (Desulfobacterium autotrophicum), this protein is Large ribosomal subunit protein bL25.